Reading from the N-terminus, the 93-residue chain is RNA-binding protein Hfq (93 aa).

One can recognise a Sm domain in the interval 9–68; sequence DPYLNALRRERIPVSIYLVNGIKLQGQIESFDQFVILLKNTVSQMVYKHAISTVVPARAI. Residues 70–81 are compositionally biased toward low complexity; it reads HNNNSNHAHQAA. Residues 70–93 form a disordered region; it reads HNNNSNHAHQAAPVQSAEVVEKVE.

It belongs to the Hfq family. As to quaternary structure, homohexamer.

Functionally, RNA chaperone that binds small regulatory RNA (sRNAs) and mRNAs to facilitate mRNA translational regulation in response to envelope stress, environmental stress and changes in metabolite concentrations. Also binds with high specificity to tRNAs. This Glaesserella parasuis serovar 5 (strain SH0165) (Haemophilus parasuis) protein is RNA-binding protein Hfq.